A 445-amino-acid polypeptide reads, in one-letter code: C4-dicarboxylate transport protein (445 aa).

8 helical membrane passes run Val24–Pro44, Leu62–Ile82, Phe105–Ala125, Gly163–Gly183, Phe201–Phe221, Leu237–Ala257, Ile322–Ser342, and Ala370–Ile390.

This sequence belongs to the dicarboxylate/amino acid:cation symporter (DAACS) (TC 2.A.23) family.

The protein localises to the cell inner membrane. In terms of biological role, responsible for the transport of dicarboxylates such as succinate, fumarate, and malate from the periplasm across the membrane. This is C4-dicarboxylate transport protein from Rhodopseudomonas palustris (strain HaA2).